Consider the following 290-residue polypeptide: MAATSLLYNQLKAAEPFFLLAGPNVIESEEHILRMAKHIKDISTKVGLPLVFKSSFDKANRTSSKSFRGPGMAEGLKILEKVKVAYDLPIVTDVHESSQCEAVGKVADIIQIPAFLCRQTDLLVAAAQTGKIINIKKGQFCAPSVMENSAEKIRLAGNPNVMVCERGTMFGYNDLIVDPRNFEWMREANCPVVADITHSLQQPAGKKLDGGGVASGGLRELIPCIARTAVAVGVDGIFMEVHDDPLSAPVDGPTQWPLRHLEELLEELIAIARVTKGKQRLQIDLTPYRD.

An N-acetylalanine modification is found at Ala2.

This sequence belongs to the KdsA family. Expressed in shoots.

Its subcellular location is the cytoplasm. The enzyme catalyses D-arabinose 5-phosphate + phosphoenolpyruvate + H2O = 3-deoxy-alpha-D-manno-2-octulosonate-8-phosphate + phosphate. Its function is as follows. Catalyzes the stereospecific condensation of D-arabinose 5-phosphate and phosphoenolpyruvate to form 3-deoxy-D-manno-octulosonate 8-phosphate (KDO-8-phosphate) and inorganic phosphate. Involved in the biosynthesis of 3-deoxy-D-manno-octulosonate (KDO) which is an indispensable component of rhamnogalacturonan II (RG-II), a structurally complex pectic polysaccharide of the primary cell wall. RG-II is essential for the cell wall integrity of rapidly growing tissues and pollen tube growth and elongation. The chain is 2-dehydro-3-deoxyphosphooctonate aldolase 1 (KDSA1) from Arabidopsis thaliana (Mouse-ear cress).